The following is a 350-amino-acid chain: MAEFIRAQIFGTTFEITSRYTDLQPVGMGAFGLVCSAKDQLTGQPVAIKKIMKPFSTPVLSKRTYRELKLLKHLKHENVISLSDIFISPLEDIYFVTELLGTDLHRLLTSRPLEKQFIQYFLYQILRGLKYVHSAGVIHRDLKPSNILVNENCDLKICDFGLARIQDPQMTGYVSTRYYRAPEIMLTWQKYDVEVDIWSAGCIFAEMLEGKPLFPGKDHVNQFSIITELLGSPPEDVIHTICSENTLRFVQSLPKRERIPLSQKFKNADPAAVDLLERMLVFDPKKRISAAQALAHEYLAPYHDPSDEPVAAEKFDWSFNDADLPVDTWKIMMYSEILDYHNVDQNDTPL.

A Protein kinase domain is found at 20–299 (YTDLQPVGMG…AAQALAHEYL (280 aa)). ATP contacts are provided by residues 26 to 34 (VGMGAFGLV) and Lys49. Residue Asp141 is the Proton acceptor of the active site. The TXY signature appears at 171 to 173 (TGY).

It belongs to the protein kinase superfamily. Ser/Thr protein kinase family. MAP kinase subfamily. HOG1 sub-subfamily. The cofactor is Mg(2+).

It localises to the cytoplasm. The protein localises to the nucleus. It carries out the reaction L-seryl-[protein] + ATP = O-phospho-L-seryl-[protein] + ADP + H(+). The enzyme catalyses L-threonyl-[protein] + ATP = O-phospho-L-threonyl-[protein] + ADP + H(+). Its function is as follows. Proline-directed serine/threonine-protein kinase involved in a signal transduction pathway that is activated by changes in the osmolarity of the extracellular environment. Controls osmotic regulation of transcription of target genes. Involved in environmental stress response. Via the downstream MSN2 transcription factor, may play roles in the regulation of growth, conidiation, trap development, fatty acid metabolism and secondary metabolites biosynthesis. This chain is Mitogen-activated protein kinase HOG1, found in Arthrobotrys oligospora (strain ATCC 24927 / CBS 115.81 / DSM 1491) (Nematode-trapping fungus).